A 122-amino-acid chain; its full sequence is Large ribosomal subunit protein uL14 (122 aa).

Belongs to the universal ribosomal protein uL14 family. In terms of assembly, part of the 50S ribosomal subunit. Forms a cluster with proteins L3 and L19. In the 70S ribosome, L14 and L19 interact and together make contacts with the 16S rRNA in bridges B5 and B8.

Its function is as follows. Binds to 23S rRNA. Forms part of two intersubunit bridges in the 70S ribosome. In Macrococcus caseolyticus (strain JCSC5402) (Macrococcoides caseolyticum), this protein is Large ribosomal subunit protein uL14.